A 147-amino-acid polypeptide reads, in one-letter code: MPRHSVFALSILALSITATVWIPTVQAETNLLRREFYGPVNPELFAAFLDDHDARGRENQRDFSSGSGTNELVDELSPVSERETLERFGKRNIDEIDRTAFDNFFKRNLDEIDRVGWSGFVKRLTNYLATTGHGTNTGGPVLTRRFG.

The N-terminal stretch at 1–27 is a signal peptide; the sequence is MPRHSVFALSILALSITATVWIPTVQA. Propeptides lie at residues 28–89 and 146–147; these read ETNL…ERFG and FG.

It belongs to the orcokinin family.

It localises to the secreted. In terms of biological role, myotropic peptides. The sequence is that of Orcokinin peptides from Apis mellifera (Honeybee).